We begin with the raw amino-acid sequence, 157 residues long: MSSAICPCGSGDLLLACCGHYHAGQPAPCAEKLMRSRYSAYVLGLTDYLVQTTLPVQQAALDREAIAQWSAQSTWLGLEVESAEVLGGKPEHAFVTFTARWHDGNGEHSHKERSSFVQNQGHWYFIDSTVPLKAGRNDGCPCGSEQKFKKCCSAYVI.

The protein belongs to the UPF0225 family.

The protein is UPF0225 protein PSPTO_4127 of Pseudomonas syringae pv. tomato (strain ATCC BAA-871 / DC3000).